The primary structure comprises 659 residues: Exoribonuclease 2 (659 aa).

One can recognise an RNB domain in the interval R189–A531. Residues N576–L658 enclose the S1 motif domain.

Belongs to the RNR ribonuclease family. RNase II subfamily.

It localises to the cytoplasm. It catalyses the reaction Exonucleolytic cleavage in the 3'- to 5'-direction to yield nucleoside 5'-phosphates.. Its function is as follows. Involved in mRNA degradation. Hydrolyzes single-stranded polyribonucleotides processively in the 3' to 5' direction. The polypeptide is Exoribonuclease 2 (Haemophilus influenzae (strain 86-028NP)).